We begin with the raw amino-acid sequence, 184 residues long: Large ribosomal subunit protein uL6 (184 aa).

It belongs to the universal ribosomal protein uL6 family. In terms of assembly, part of the 50S ribosomal subunit.

In terms of biological role, this protein binds to the 23S rRNA, and is important in its secondary structure. It is located near the subunit interface in the base of the L7/L12 stalk, and near the tRNA binding site of the peptidyltransferase center. The polypeptide is Large ribosomal subunit protein uL6 (Pyrococcus furiosus (strain ATCC 43587 / DSM 3638 / JCM 8422 / Vc1)).